The sequence spans 43 residues: MAKLHDYYKDEVVKQLMSQFDYNSVMQVPRVEKITLNMGVGEA.

Belongs to the universal ribosomal protein uL5 family. Part of the 50S ribosomal subunit; part of the 5S rRNA/L5/L18/L25 subcomplex. Contacts the 5S rRNA and the P site tRNA. Forms a bridge to the 30S subunit in the 70S ribosome.

This is one of the proteins that bind and probably mediate the attachment of the 5S RNA into the large ribosomal subunit, where it forms part of the central protuberance. In the 70S ribosome it contacts protein S13 of the 30S subunit (bridge B1b), connecting the 2 subunits; this bridge is implicated in subunit movement. Contacts the P site tRNA; the 5S rRNA and some of its associated proteins might help stabilize positioning of ribosome-bound tRNAs. The chain is Large ribosomal subunit protein uL5 (rplE) from Serratia marcescens.